An 89-amino-acid chain; its full sequence is Cytochrome b-c1 complex subunit 6, mitochondrial (89 aa).

A mitochondrion-targeting transit peptide spans 1-13; sequence MGLEDERKMLTGS. The segment at 1 to 27 is disordered; sequence MGLEDERKMLTGSGDPKEEEEEELVDP. Disulfide bonds link Cys35/Cys79 and Cys51/Cys65. Lys40 carries the post-translational modification N6-acetyllysine. N6-acetyllysine is present on Lys83.

This sequence belongs to the UQCRH/QCR6 family. In terms of assembly, component of the ubiquinol-cytochrome c oxidoreductase (cytochrome b-c1 complex, complex III, CIII), a multisubunit enzyme composed of 11 subunits. The complex is composed of 3 respiratory subunits cytochrome b, cytochrome c1 and Rieske protein UQCRFS1, 2 core protein subunits UQCRC1/QCR1 and UQCRC2/QCR2, and 6 low-molecular weight protein subunits UQCRH/QCR6, UQCRB/QCR7, UQCRQ/QCR8, UQCR10/QCR9, UQCR11/QCR10 and subunit 9, the cleavage product of Rieske protein UQCRFS1. The complex exists as an obligatory dimer and forms supercomplexes (SCs) in the inner mitochondrial membrane with NADH-ubiquinone oxidoreductase (complex I, CI) and cytochrome c oxidase (complex IV, CIV), resulting in different assemblies (supercomplex SCI(1)III(2)IV(1) and megacomplex MCI(2)III(2)IV(2)).

Its subcellular location is the mitochondrion inner membrane. Its function is as follows. Component of the ubiquinol-cytochrome c oxidoreductase, a multisubunit transmembrane complex that is part of the mitochondrial electron transport chain which drives oxidative phosphorylation. The respiratory chain contains 3 multisubunit complexes succinate dehydrogenase (complex II, CII), ubiquinol-cytochrome c oxidoreductase (cytochrome b-c1 complex, complex III, CIII) and cytochrome c oxidase (complex IV, CIV), that cooperate to transfer electrons derived from NADH and succinate to molecular oxygen, creating an electrochemical gradient over the inner membrane that drives transmembrane transport and the ATP synthase. The cytochrome b-c1 complex catalyzes electron transfer from ubiquinol to cytochrome c, linking this redox reaction to translocation of protons across the mitochondrial inner membrane, with protons being carried across the membrane as hydrogens on the quinol. In the process called Q cycle, 2 protons are consumed from the matrix, 4 protons are released into the intermembrane space and 2 electrons are passed to cytochrome c. The chain is Cytochrome b-c1 complex subunit 6, mitochondrial (Uqcrh) from Rattus norvegicus (Rat).